The chain runs to 126 residues: RutC family protein PH0854 (126 aa).

This sequence belongs to the RutC family.

The sequence is that of RutC family protein PH0854 from Pyrococcus horikoshii (strain ATCC 700860 / DSM 12428 / JCM 9974 / NBRC 100139 / OT-3).